The sequence spans 393 residues: High mobility group protein DSP1 (393 aa).

The tract at residues 153-179 (QMQQQQQQQNVINSASPMSRVKADAKP) is disordered. 2 DNA-binding regions (HMG box) span residues 179 to 249 (PRGR…QNYV) and 271 to 339 (PKRS…TEYK). Residues 364-374 (LLAAAAQQQHQ) are compositionally biased toward low complexity. Positions 364-393 (LLAAAAQQQHQQLEEQHDDDDGDGDDDENQ) are disordered. Acidic residues predominate over residues 379–393 (QHDDDDGDGDDDENQ).

It belongs to the HMGB family.

The protein localises to the nucleus. It is found in the chromosome. Functionally, binds preferentially single-stranded DNA and unwinds double-stranded DNA. This Drosophila melanogaster (Fruit fly) protein is High mobility group protein DSP1 (Dsp1).